We begin with the raw amino-acid sequence, 282 residues long: Reaction center protein L chain (282 aa).

The Cytoplasmic portion of the chain corresponds to 2–32 (ALLSFERKYRVPGGTLVGGNLFDFWVGPFYV). The chain crosses the membrane as a helical span at residues 33 to 56 (GFFGVATFFFAALGIILIAWSAVL). Residues 57–83 (QGTWNPQLISVYPPALEYGLGGAPLAK) lie on the Periplasmic side of the membrane. A helical transmembrane segment spans residues 84–112 (GGLWQIITICATGAFVSWALREVEICRKL). Topologically, residues 113-116 (GIGY) are cytoplasmic. Residues 117–139 (HIPFAFAFAILAYLTLVLFRPVM) form a helical membrane-spanning segment. Over 140–171 (MGAWGYAFPYGIWTHLDWVSNTGYTYGNFHYN) the chain is Periplasmic. (7R,8Z)-bacteriochlorophyll b contacts are provided by H154 and H174. Residues 172 to 199 (PAHMIAISFFFTNALALALHGALVLSAA) form a helical membrane-spanning segment. H191 serves as a coordination point for Fe cation. Topologically, residues 200–225 (NPEKGKEMRTPDHEDTFFRDLVGYSI) are cytoplasmic. Position 217 (F217) interacts with a ubiquinone. Residues 226–251 (GTLGIHRLGLLLSLSAVFFSALCMII) form a helical membrane-spanning segment. H231 is a Fe cation binding site. Over 252–282 (TGTIWFDQWVDWWQWWVKLPWWANIPGGING) the chain is Periplasmic.

The protein belongs to the reaction center PufL/M/PsbA/D family. As to quaternary structure, reaction center is composed of four bacteriochlorophylls, two bacteriopheophytins, two ubiquinones, one iron, and three highly hydrophobic polypeptide chains (designated L, M, and H).

It is found in the cellular chromatophore membrane. The reaction center is a membrane-bound complex that mediates the initial photochemical event in the electron transfer process of photosynthesis. The sequence is that of Reaction center protein L chain (pufL) from Cereibacter sphaeroides (strain ATCC 17023 / DSM 158 / JCM 6121 / CCUG 31486 / LMG 2827 / NBRC 12203 / NCIMB 8253 / ATH 2.4.1.) (Rhodobacter sphaeroides).